The following is a 189-amino-acid chain: MSKPTREEAKEAVRTLLKFIGEDPSREGLLKTPDRVINSYAEIFSGYGKDVAEILNTKFYETCNFRDFILLNIKFTSFCEHHILPFNGTVDIAYVPDNCIVGISKLARIVNIFARRLQIQEKMTVQIAESVQENLKPLGVAVKISAVHSCMSMRGVMQDNSVMNTMHYTGIFAEQQKYRHEFLNLTAKR.

Zn(2+) contacts are provided by C79, H82, and C150.

Belongs to the GTP cyclohydrolase I family. As to quaternary structure, homomer.

It carries out the reaction GTP + H2O = 7,8-dihydroneopterin 3'-triphosphate + formate + H(+). It participates in cofactor biosynthesis; 7,8-dihydroneopterin triphosphate biosynthesis; 7,8-dihydroneopterin triphosphate from GTP: step 1/1. The sequence is that of GTP cyclohydrolase 1 from Rickettsia rickettsii (strain Iowa).